Consider the following 336-residue polypeptide: Methionyl-tRNA formyltransferase (336 aa).

Residue 110–113 (SLLP) participates in (6S)-5,6,7,8-tetrahydrofolate binding.

It belongs to the Fmt family.

It carries out the reaction L-methionyl-tRNA(fMet) + (6R)-10-formyltetrahydrofolate = N-formyl-L-methionyl-tRNA(fMet) + (6S)-5,6,7,8-tetrahydrofolate + H(+). Its function is as follows. Attaches a formyl group to the free amino group of methionyl-tRNA(fMet). The formyl group appears to play a dual role in the initiator identity of N-formylmethionyl-tRNA by promoting its recognition by IF2 and preventing the misappropriation of this tRNA by the elongation apparatus. This chain is Methionyl-tRNA formyltransferase, found in Prochlorococcus marinus (strain NATL2A).